A 456-amino-acid chain; its full sequence is 3-isopropylmalate dehydratase large subunit (456 aa).

The [4Fe-4S] cluster site is built by C336, C396, and C399.

Belongs to the aconitase/IPM isomerase family. LeuC type 1 subfamily. As to quaternary structure, heterodimer of LeuC and LeuD. [4Fe-4S] cluster serves as cofactor.

The enzyme catalyses (2R,3S)-3-isopropylmalate = (2S)-2-isopropylmalate. It participates in amino-acid biosynthesis; L-leucine biosynthesis; L-leucine from 3-methyl-2-oxobutanoate: step 2/4. Its function is as follows. Catalyzes the isomerization between 2-isopropylmalate and 3-isopropylmalate, via the formation of 2-isopropylmaleate. This chain is 3-isopropylmalate dehydratase large subunit, found in Staphylococcus haemolyticus (strain JCSC1435).